The chain runs to 1129 residues: Phytochrome A (1129 aa).

Residues 217–399 enclose the GAF domain; sequence SMERLCDTMV…VFAIHVSKEL (183 aa). Cys-322 lines the phytochromobilin pocket. 2 consecutive PAS domains span residues 622–692 and 755–826; these read VTSE…LQGK and DYKA…VNLG. Residues 906–1123 form the Histidine kinase domain; it reads YLRRQAKNPL…TFIITVELAA (218 aa).

It belongs to the phytochrome family. As to quaternary structure, homodimer. Contains one covalently linked phytochromobilin chromophore.

Functionally, regulatory photoreceptor which exists in two forms that are reversibly interconvertible by light: the Pr form that absorbs maximally in the red region of the spectrum and the Pfr form that absorbs maximally in the far-red region. Photoconversion of Pr to Pfr induces an array of morphogenic responses, whereas reconversion of Pfr to Pr cancels the induction of those responses. Pfr controls the expression of a number of nuclear genes including those encoding the small subunit of ribulose-bisphosphate carboxylase, chlorophyll A/B binding protein, protochlorophyllide reductase, rRNA, etc. It also controls the expression of its own gene(s) in a negative feedback fashion. This chain is Phytochrome A (PHYA), found in Petroselinum crispum (Parsley).